The primary structure comprises 571 residues: Proline--tRNA ligase (571 aa).

This sequence belongs to the class-II aminoacyl-tRNA synthetase family. ProS type 1 subfamily. In terms of assembly, homodimer.

It is found in the cytoplasm. The enzyme catalyses tRNA(Pro) + L-proline + ATP = L-prolyl-tRNA(Pro) + AMP + diphosphate. In terms of biological role, catalyzes the attachment of proline to tRNA(Pro) in a two-step reaction: proline is first activated by ATP to form Pro-AMP and then transferred to the acceptor end of tRNA(Pro). As ProRS can inadvertently accommodate and process non-cognate amino acids such as alanine and cysteine, to avoid such errors it has two additional distinct editing activities against alanine. One activity is designated as 'pretransfer' editing and involves the tRNA(Pro)-independent hydrolysis of activated Ala-AMP. The other activity is designated 'posttransfer' editing and involves deacylation of mischarged Ala-tRNA(Pro). The misacylated Cys-tRNA(Pro) is not edited by ProRS. The protein is Proline--tRNA ligase of Leuconostoc citreum (strain KM20).